The following is a 138-amino-acid chain: Acidic phospholipase A2 PePLA2 (138 aa).

The first 16 residues, 1 to 16, serve as a signal peptide directing secretion; it reads MRTLWIMAVLLLGVEG. 7 cysteine pairs are disulfide-bonded: Cys-42–Cys-131, Cys-44–Cys-60, Cys-59–Cys-110, Cys-65–Cys-138, Cys-66–Cys-103, Cys-73–Cys-97, and Cys-91–Cys-101. Positions 43, 45, and 47 each coordinate Ca(2+). His-63 is an active-site residue. Ca(2+) is bound at residue Asp-64. Residue Asp-104 is part of the active site.

It belongs to the phospholipase A2 family. Group II subfamily. D49 sub-subfamily. It depends on Ca(2+) as a cofactor. In terms of tissue distribution, expressed by the venom gland.

The protein resides in the secreted. The enzyme catalyses a 1,2-diacyl-sn-glycero-3-phosphocholine + H2O = a 1-acyl-sn-glycero-3-phosphocholine + a fatty acid + H(+). In terms of biological role, PLA2 catalyzes the calcium-dependent hydrolysis of the 2-acyl groups in 3-sn-phosphoglycerides. The sequence is that of Acidic phospholipase A2 PePLA2 from Protobothrops elegans (Elegant pitviper).